The chain runs to 156 residues: Transcriptional repressor NrdR (156 aa).

Residues 3–34 fold into a zinc finger; sequence CPYCGETEDKVIDSRQGKEADVIRRRRECLSC. The region spanning 49-139 is the ATP-cone domain; it reads LVIIKKDGRR…VYREFKHVND (91 aa).

This sequence belongs to the NrdR family. The cofactor is Zn(2+).

In terms of biological role, negatively regulates transcription of bacterial ribonucleotide reductase nrd genes and operons by binding to NrdR-boxes. The chain is Transcriptional repressor NrdR from Desulfatibacillum aliphaticivorans.